The chain runs to 223 residues: Matrix protein (223 aa).

Residues 1–10 (MLTLFKKGKP) show a composition bias toward basic residues. The segment at 1 to 23 (MLTLFKKGKPKGGSVDDRNSSYR) is disordered. Residues 14-23 (SVDDRNSSYR) show a composition bias toward basic and acidic residues.

As to quaternary structure, homomultimer. Interacts with nucleoprotein and with the cytoplasmic domain of glycoprotein.

It is found in the virion membrane. It localises to the host endomembrane system. Functionally, plays a major role in assembly and budding of virion. Completely covers the ribonucleoprotein coil and keep it in condensed bullet-shaped form. Inhibits viral transcription and stimulates replication. The chain is Matrix protein (M) from Bos taurus (Bovine).